A 385-amino-acid chain; its full sequence is Deoxyguanosinetriphosphate triphosphohydrolase-like protein (385 aa).

Residues 1–14 (MTEGVEGRSQERSD) are compositionally biased toward basic and acidic residues. Residues 1-23 (MTEGVEGRSQERSDLAGFAARSA) are disordered. In terms of domain architecture, HD spans 75 to 204 (RLTHSLEVAQ…INYADEIAYN (130 aa)).

This sequence belongs to the dGTPase family. Type 2 subfamily.

This Geobacter metallireducens (strain ATCC 53774 / DSM 7210 / GS-15) protein is Deoxyguanosinetriphosphate triphosphohydrolase-like protein.